Here is an 819-residue protein sequence, read N- to C-terminus: MWKWNVRRWAGARVNISKNRLSVINVGSRYLSTARSPLSKVRNIGIIAHIDAGKTTTTERMLYYAGISKHIGDVDTGDTITDFLEQERSRGITIQSAAISFPWRNTFAINLIDTPGHIDFTFEVIRALKVIDSCVVILDAVAGVEAQTEKVWKQSKSKPKICFINKMDRMGASFNHTVNDLINKFMRGTTTKPVLVNIPYYRKQPTSNDYVFQGVIDVVNGKRLTWNPENPDEIIVDELDGTSLEQCNRCRESMIETLTEYDEDLVQHFLEEAEGDYSKVSAQFLNASIRKLTMKNMIVPVLCGASFKNIGVQPLLDAIVNYLPSPIEAELPELNDKTVPMKYDPKVGCLVNNNKNLCIALAFKVITDPIRGKQIFIRIYSGTLNSGNTVYNSTTGEKFKLGKLLIPHAGTSQPVNILTAGQIGLLTGSTVENNISTGDTLITHSSKKDGLKSLDKKKELTLKINSIFIPPPVFGVSIEPRTLSNKKSMEEALNTLITEDPSLSISQNDETGQTVLNGMGELHLEIAKDRLVNDLKADVEFGQLMVSYKETINSETNIETYESDDGYRFSLSLLPNSDALPNCLAYPLGVNENFLIMEKNGNWDKEWKYQVSFESILNSIIASCIVGLQRGGKIANFPLYACSIKINSDWSVPPDIETPQEILKITRNLIFKALNDLKPEKYNLLEPIMNLDLTIPQSDVGTVLQDLTGARKAQILSIEDESSVSNSGASTCNSPENSNRIYIPSDAVTTLHATKDKKNTQETSSNVKKIIKAKVPLREITTYTNKLRSLSQGRGEFNIEYSDMEKVTNDRLQSILHDL.

A mitochondrion-targeting transit peptide spans 1-30 (MWKWNVRRWAGARVNISKNRLSVINVGSRY). Positions 39–327 (SKVRNIGIIA…AIVNYLPSPI (289 aa)) constitute a tr-type G domain. GTP contacts are provided by residues 48 to 55 (AHIDAGKT), 113 to 117 (DTPGH), and 165 to 168 (NKMD).

This sequence belongs to the TRAFAC class translation factor GTPase superfamily. Classic translation factor GTPase family. EF-G/EF-2 subfamily.

Its subcellular location is the mitochondrion. In terms of biological role, mitochondrial GTPase that mediates the disassembly of ribosomes from messenger RNA at the termination of mitochondrial protein biosynthesis. Not involved in the GTP-dependent ribosomal translocation step during translation elongation. The chain is Ribosome-releasing factor 2, mitochondrial from Saccharomyces cerevisiae (strain RM11-1a) (Baker's yeast).